The following is a 262-amino-acid chain: DNA repair protein RecO (262 aa).

This sequence belongs to the RecO family.

Its function is as follows. Involved in DNA repair and RecF pathway recombination. This is DNA repair protein RecO from Acidovorax ebreus (strain TPSY) (Diaphorobacter sp. (strain TPSY)).